The sequence spans 250 residues: 2,3-bisphosphoglycerate-dependent phosphoglycerate mutase (250 aa).

Substrate-binding positions include 8 to 15, 21 to 22, Arg60, 87 to 90, Lys98, 114 to 115, and 183 to 184; these read RHGQSAWN, TG, ERHY, RR, and GN. Residue His9 is the Tele-phosphohistidine intermediate of the active site. Catalysis depends on Glu87, which acts as the Proton donor/acceptor.

Belongs to the phosphoglycerate mutase family. BPG-dependent PGAM subfamily. Homodimer.

The enzyme catalyses (2R)-2-phosphoglycerate = (2R)-3-phosphoglycerate. Its pathway is carbohydrate degradation; glycolysis; pyruvate from D-glyceraldehyde 3-phosphate: step 3/5. Catalyzes the interconversion of 2-phosphoglycerate and 3-phosphoglycerate. The polypeptide is 2,3-bisphosphoglycerate-dependent phosphoglycerate mutase (Nitratidesulfovibrio vulgaris (strain DP4) (Desulfovibrio vulgaris)).